Reading from the N-terminus, the 197-residue chain is LexA repressor (197 aa).

The segment at residues 28–47 is a DNA-binding region (H-T-H motif); it reads VREIARRFRITPRGALLHLI. Active-site for autocatalytic cleavage activity residues include Ser119 and Lys156.

This sequence belongs to the peptidase S24 family. As to quaternary structure, homodimer.

The catalysed reaction is Hydrolysis of Ala-|-Gly bond in repressor LexA.. In terms of biological role, represses a number of genes involved in the response to DNA damage (SOS response), including recA and lexA. In the presence of single-stranded DNA, RecA interacts with LexA causing an autocatalytic cleavage which disrupts the DNA-binding part of LexA, leading to derepression of the SOS regulon and eventually DNA repair. The chain is LexA repressor from Thermotoga sp. (strain RQ2).